The following is a 490-amino-acid chain: MAQRAVWLISHESGTPLGGIVKFSRRYPTVEKRAKVFNGASYVPVPEDGPFLKALLFELRLLDDEKDFLESRDSCSHINKTSIYGVPVGGEELWPVVAFLKNGMIYACVPLVEQTLSPRPPLISISGISQGFELLFGVQDFLSSGQKTDSELNTKLSQLSDLLLQTCPFGTLLDANLQNSLDSINSASVTHLQKQPAWKTGTYKGKPQVSISITEKVNSMQYDKQEIADTWQVVGVVTCKCDLEGSMPNVTISLSLPTNGSPLQDILVHPCVTSLDSAILTSSSIDAMDDSAFSGPYKFPLTPPLESFNLCYYTSQVPVPPILGFYQVKEEEVQLKITVNLKLHESVKNSFEFCEAHIPFYNRGPITHVEYKASFGQLEVFREKSLLVWIIGQKFPKSMEISLSGTITFGAKNHEKQPFDQICIGGTAYLKLHFRILDYTLTGCYVDQHSVQVFASGKPKISTYRKLISSDYYIWNSKAPAPVTYGSLLL.

The MHD domain maps to 206-476 (KPQVSISITE…LISSDYYIWN (271 aa)).

The protein belongs to the adaptor complexes medium subunit family. As to quaternary structure, probably part of the adaptor protein complex 5 (AP-5) a tetramer composed of AP5B1, AP5M1, AP5S1 and AP5Z1.

It localises to the cytoplasm. The protein localises to the cytosol. It is found in the late endosome membrane. Its subcellular location is the lysosome membrane. Functionally, as part of AP-5, a probable fifth adaptor protein complex it may be involved in endosomal transport. The polypeptide is AP-5 complex subunit mu-1 (AP5M1) (Bos taurus (Bovine)).